Consider the following 250-residue polypeptide: L-ascorbate peroxidase, cytosolic (250 aa).

Catalysis depends on His42, which acts as the Proton acceptor. The disordered stretch occupies residues 113–137; sequence VPFHPGREDKPEPPPEGRLPDATKG. A compositionally biased stretch (basic and acidic residues) spans 117-137; the sequence is PGREDKPEPPPEGRLPDATKG. Heme b is bound at residue His163. Thr164, Thr180, Asn182, Ile185, and Asp187 together coordinate K(+).

This sequence belongs to the peroxidase family. Ascorbate peroxidase subfamily. Heme b serves as cofactor.

It is found in the cytoplasm. The enzyme catalyses L-ascorbate + H2O2 = L-dehydroascorbate + 2 H2O. Functionally, plays a key role in hydrogen peroxide removal. The polypeptide is L-ascorbate peroxidase, cytosolic (APX1) (Pisum sativum (Garden pea)).